Consider the following 219-residue polypeptide: Protein VERNALIZATION 2 (219 aa).

One can recognise a CCT domain in the interval 138–180; the sequence is REAKVMRYREKKKRRRYEKQIRYESRKAYAEMRPRVKGRFAKV.

Mainly expressed in leaves, and at low levels in the shoot apical meristem (SAM).

It is found in the nucleus. Its function is as follows. Involved in the regulation of vernalization; this process in essential for flowering in cv. Bd29-1 but seems do not occur in cv. Bd21. The sequence is that of Protein VERNALIZATION 2 from Brachypodium distachyon (Purple false brome).